Consider the following 384-residue polypeptide: FAD-dependent urate hydroxylase (384 aa).

FAD is bound by residues glycine 11, 30-31 (EA), serine 43, and valine 125. Residues asparagine 178, arginine 204, and 216 to 218 (YFF) each bind substrate. FAD is bound by residues aspartate 285 and 295–299 (GQGGC).

The protein belongs to the FAD-dependent urate hydroxylase family. Monomer. FAD serves as cofactor.

It carries out the reaction urate + NADH + O2 + H(+) = 5-hydroxyisourate + NAD(+) + H2O. Its pathway is purine metabolism; urate degradation. In terms of biological role, catalyzes the hydroxylation of urate to 5-hydroxyisourate (HIU). This is FAD-dependent urate hydroxylase from Klebsiella pneumoniae subsp. pneumoniae (strain ATCC 700721 / MGH 78578).